Consider the following 206-residue polypeptide: Small ribosomal subunit protein uS4 (206 aa).

In terms of domain architecture, S4 RNA-binding spans 98 to 158 (RRLDNVVFRL…EKSRSMELIK (61 aa)).

Belongs to the universal ribosomal protein uS4 family. As to quaternary structure, part of the 30S ribosomal subunit. Contacts protein S5. The interaction surface between S4 and S5 is involved in control of translational fidelity.

In terms of biological role, one of the primary rRNA binding proteins, it binds directly to 16S rRNA where it nucleates assembly of the body of the 30S subunit. Its function is as follows. With S5 and S12 plays an important role in translational accuracy. The protein is Small ribosomal subunit protein uS4 of Thermoanaerobacter pseudethanolicus (strain ATCC 33223 / 39E) (Clostridium thermohydrosulfuricum).